Consider the following 384-residue polypeptide: Zinc finger protein GLIS2 homolog (384 aa).

Residues 128–153 (FVCNWTDCDRVFDTLDALAQHVTQRH) form a C2H2-type 1 zinc finger. Residues 163–190 (YYCRWRGCQRSERGFNARYKMLVHTRTH) form a C2H2-type 2; degenerate zinc finger. 3 consecutive C2H2-type zinc fingers follow at residues 196 to 218 (HRCH…IRSH), 224 to 248 (YKCS…TRTH), and 254 to 280 (YMCK…TFKH). The interval 321-343 (SSSSARYYDDSNNEPSDYSLKPK) is disordered.

The protein belongs to the GLI C2H2-type zinc-finger protein family.

It is found in the nucleus. Functionally, transcription factor which represses a set of lipase genes involved in fat catabolism. The polypeptide is Zinc finger protein GLIS2 homolog (sug) (Drosophila melanogaster (Fruit fly)).